Here is a 56-residue protein sequence, read N- to C-terminus: Large ribosomal subunit protein bL33c (56 aa).

It belongs to the bacterial ribosomal protein bL33 family.

It localises to the plastid. Its subcellular location is the chloroplast. The sequence is that of Large ribosomal subunit protein bL33c from Rhodomonas salina (Cryptomonas salina).